We begin with the raw amino-acid sequence, 518 residues long: Retinal dehydrogenase 2 (518 aa).

Phosphotyrosine is present on Y168. NAD(+)-binding positions include 184 to 186, 210 to 213, and 264 to 266; these read IPW, KPAE, and STE. Catalysis depends on E286, which acts as the Proton acceptor. C320 acts as the Nucleophile in catalysis. Phosphoserine is present on S351. Residues 366-370 and E417 contribute to the NAD(+) site; that span reads KQYNK.

This sequence belongs to the aldehyde dehydrogenase family. As to quaternary structure, homotetramer.

It is found in the cytoplasm. The enzyme catalyses retinal + NAD(+) + H2O = retinoate + NADH + 2 H(+). The catalysed reaction is all-trans-retinal + NAD(+) + H2O = all-trans-retinoate + NADH + 2 H(+). It catalyses the reaction all-trans-13,14-dihydroretinal + NAD(+) + H2O = all-trans-13,14-dihydroretinoate + NADH + 2 H(+). Its pathway is cofactor metabolism; retinol metabolism. In terms of biological role, catalyzes the NAD-dependent oxidation of aldehyde substrates, such as all-trans-retinal and all-trans-13,14-dihydroretinal, to their corresponding carboxylic acids, all-trans-retinoate and all-trans-13,14-dihydroretinoate, respectively. Retinoate signaling is critical for the transcriptional control of many genes, for instance it is crucial for initiation of meiosis in both male and female. Recognizes retinal as substrate, both in its free form and when bound to cellular retinol-binding protein. Lacks activity with benzaldehyde, acetaldehyde and octanal. Displays complete lack of activity with citral. This is Retinal dehydrogenase 2 (Aldh1a2) from Mus musculus (Mouse).